The chain runs to 514 residues: Adenylosuccinate synthetase 1, chloroplastic (514 aa).

The N-terminal 73 residues, 1-73, are a transit peptide targeting the chloroplast; the sequence is MAMAAAAAVA…AQAIERESVK (73 aa). GTP-binding positions include 100–106 and 128–130; these read GDEGKGK and GHT. The active-site Proton acceptor is D101. Mg(2+)-binding residues include D101 and G128. IMP is bound by residues 101-104, 126-129, T218, R232, Q312, T327, and R391; these read DEGK and NAGH. The active-site Proton donor is H129. 387–393 contributes to the substrate binding site; the sequence is TTTGRPR. Residues R393, 419 to 421, and 502 to 504 contribute to the GTP site; these read KLD and GVG.

This sequence belongs to the adenylosuccinate synthetase family. Homodimer. Requires Mg(2+) as cofactor.

The protein localises to the plastid. It is found in the chloroplast. The catalysed reaction is IMP + L-aspartate + GTP = N(6)-(1,2-dicarboxyethyl)-AMP + GDP + phosphate + 2 H(+). Its pathway is purine metabolism; AMP biosynthesis via de novo pathway; AMP from IMP: step 1/2. Functionally, plays an important role in the de novo pathway and in the salvage pathway of purine nucleotide biosynthesis. Catalyzes the first committed step in the biosynthesis of AMP from IMP. The polypeptide is Adenylosuccinate synthetase 1, chloroplastic (Physcomitrium patens (Spreading-leaved earth moss)).